A 417-amino-acid chain; its full sequence is DNA primase DnaG (417 aa).

The region spanning 171–257 is the Toprim domain; the sequence is DAIIIVEGRA…SVEDMARKEI (87 aa). Mg(2+) is bound by residues E177, D219, and D221. The disordered stretch occupies residues 278-325; it reads VPGEKRTQDLRPQKPGASEQNSIKKENVENENESTPTSFEPISEPAPP. Over residues 279-289 the composition is skewed to basic and acidic residues; it reads PGEKRTQDLRP.

The protein belongs to the archaeal DnaG primase family. As to quaternary structure, forms a ternary complex with MCM helicase and DNA. The cofactor is Mg(2+).

It carries out the reaction ssDNA + n NTP = ssDNA/pppN(pN)n-1 hybrid + (n-1) diphosphate.. Functionally, RNA polymerase that catalyzes the synthesis of short RNA molecules used as primers for DNA polymerase during DNA replication. This is DNA primase DnaG from Methanosphaerula palustris (strain ATCC BAA-1556 / DSM 19958 / E1-9c).